We begin with the raw amino-acid sequence, 76 residues long: ATP synthase peripheral stalk subunit F6, mitochondrial (76 aa).

Residues lysine 9, lysine 14, and lysine 47 each carry the N6-acetyllysine modification. Lysine 52 and lysine 67 each carry N6-acetyllysine; alternate. An N6-succinyllysine; alternate mark is found at lysine 52 and lysine 67. Lysine 73 carries the N6-acetyllysine modification. At serine 76 the chain carries Phosphoserine.

It belongs to the eukaryotic ATPase subunit F6 family. As to quaternary structure, component of the ATP synthase complex composed at least of ATP5F1A/subunit alpha, ATP5F1B/subunit beta, ATP5MC1/subunit c (homooctomer), MT-ATP6/subunit a, MT-ATP8/subunit 8, ATP5ME/subunit e, ATP5MF/subunit f, ATP5MG/subunit g, ATP5MK/subunit k, ATP5MJ/subunit j, ATP5F1C/subunit gamma, ATP5F1D/subunit delta, ATP5F1E/subunit epsilon, ATP5PF/subunit F6, ATP5PB/subunit b, ATP5PD/subunit d, ATP5PO/subunit OSCP. ATP synthase complex consists of a soluble F(1) head domain (subunits alpha(3) and beta(3)) - the catalytic core - and a membrane F(0) domain - the membrane proton channel (subunits c, a, 8, e, f, g, k and j). These two domains are linked by a central stalk (subunits gamma, delta, and epsilon) rotating inside the F1 region and a stationary peripheral stalk (subunits F6, b, d, and OSCP).

Its subcellular location is the mitochondrion. The protein resides in the mitochondrion inner membrane. In terms of biological role, subunit F6, of the mitochondrial membrane ATP synthase complex (F(1)F(0) ATP synthase or Complex V) that produces ATP from ADP in the presence of a proton gradient across the membrane which is generated by electron transport complexes of the respiratory chain. ATP synthase complex consist of a soluble F(1) head domain - the catalytic core - and a membrane F(1) domain - the membrane proton channel. These two domains are linked by a central stalk rotating inside the F(1) region and a stationary peripheral stalk. During catalysis, ATP synthesis in the catalytic domain of F(1) is coupled via a rotary mechanism of the central stalk subunits to proton translocation. In vivo, can only synthesize ATP although its ATP hydrolase activity can be activated artificially in vitro. Part of the complex F(0) domain. Part of the complex F(0) domain and the peripheric stalk, which acts as a stator to hold the catalytic alpha(3)beta(3) subcomplex and subunit a/ATP6 static relative to the rotary elements. This is ATP synthase peripheral stalk subunit F6, mitochondrial from Sus scrofa (Pig).